A 972-amino-acid chain; its full sequence is Hyaluronan synthase (972 aa).

The A1 stretch occupies residues 152 to 325; sequence KPEHQHVGLS…VSLDWRLEQF (174 aa). Positions 432 to 604 are A2; sequence EDSHINRVPL…IRAWHLTDGF (173 aa).

This sequence belongs to the glycosyltransferase 2 family. CS/HAS subfamily. Requires Mg(2+) as cofactor. Co(2+) is required as a cofactor.

It is found in the cell membrane. The catalysed reaction is [hyaluronan](n) + UDP-N-acetyl-alpha-D-glucosamine = N-acetyl-beta-D-glucosaminyl-(1-&gt;4)-[hyaluronan](n) + UDP + H(+). The enzyme catalyses N-acetyl-beta-D-glucosaminyl-(1-&gt;4)-[hyaluronan](n) + UDP-alpha-D-glucuronate = [hyaluronan](n+1) + UDP + H(+). It catalyses the reaction 3-O-(beta-D-GalNAc-(1-&gt;4)-beta-D-GlcA-(1-&gt;3)-beta-D-Gal-(1-&gt;3)-beta-D-Gal-(1-&gt;4)-beta-D-Xyl)-L-seryl-[protein] + UDP-alpha-D-glucuronate = 3-O-(beta-D-GlcA-(1-&gt;3)-beta-D-GalNAc-(1-&gt;4)-beta-D-GlcA-(1-&gt;3)-beta-D-Gal-(1-&gt;3)-beta-D-Gal-(1-&gt;4)-beta-D-Xyl)-L-seryl-[protein] + UDP + H(+). It carries out the reaction 3-O-{[beta-D-GalNAc-(1-&gt;4)-beta-D-GlcA-(1-&gt;3)](n)-beta-D-GalNAc-(1-&gt;4)-beta-D-GlcA-(1-&gt;3)-beta-D-Gal-(1-&gt;3)-beta-D-Gal-(1-&gt;4)-beta-D-Xyl}-L-seryl-[protein] + UDP-alpha-D-glucuronate = 3-O-{beta-D-GlcA-(1-&gt;3)-[beta-D-GalNAc-(1-&gt;4)-beta-D-GlcA-(1-&gt;3)](n)-beta-D-GalNAc-(1-&gt;4)-beta-D-GlcA-(1-&gt;3)-beta-D-Gal-(1-&gt;3)-beta-D-Gal-(1-&gt;4)-beta-D-Xyl}-L-seryl-[protein] + UDP + H(+). Catalyzes the polymerization of hyaluronan, a polysaccharide composed of a repeating disaccharide of N-acetylglucosamine (GlcNAc) and glucuronic acid (GlcUA) units. Each unit has the composition in beta-(1-&gt;4)-GlcUA-beta-(1-&gt;3)-GlcNAc. The chain is Hyaluronan synthase (hyaD) from Pasteurella multocida.